The sequence spans 288 residues: Bifunctional protein FolD (288 aa).

Residues 166–168 (GRS), S191, and V232 each bind NADP(+).

The protein belongs to the tetrahydrofolate dehydrogenase/cyclohydrolase family. Homodimer.

The enzyme catalyses (6R)-5,10-methylene-5,6,7,8-tetrahydrofolate + NADP(+) = (6R)-5,10-methenyltetrahydrofolate + NADPH. It catalyses the reaction (6R)-5,10-methenyltetrahydrofolate + H2O = (6R)-10-formyltetrahydrofolate + H(+). The protein operates within one-carbon metabolism; tetrahydrofolate interconversion. Catalyzes the oxidation of 5,10-methylenetetrahydrofolate to 5,10-methenyltetrahydrofolate and then the hydrolysis of 5,10-methenyltetrahydrofolate to 10-formyltetrahydrofolate. This chain is Bifunctional protein FolD, found in Roseiflexus castenholzii (strain DSM 13941 / HLO8).